The chain runs to 380 residues: Acyl-coenzyme A diphosphatase SCS3 (380 aa).

Over 1 to 7 (MSSKWFN) the chain is Cytoplasmic. The helical transmembrane segment at 8 to 28 (AIHLLVCPLTVLVGYLMNAYG) threads the bilayer. Over 29 to 43 (YGAALQATLNKDGLV) the chain is Lumenal. The chain crosses the membrane as a helical span at residues 44 to 64 (NAMLVKKGWFWTSLVGWWCII). Topologically, residues 65–88 (RYRAVPGATGRDRRHIVQSFKRYA) are cytoplasmic. Residues 89–109 (ILTVWWYVFTQGIWFGVGPIM) form a helical membrane-spanning segment. Residues 110 to 233 (DLVFVYTGGH…GHWAGGHDPS (124 aa)) are Lumenal-facing. Residues 234–254 (GHVFLATLMCMFLLGELRVFG) traverse the membrane as a helical segment. His-235 is a catalytic residue. At 255–325 (RRALAHLYAQ…LTRCIACDHP (71 aa)) the chain is on the cytoplasmic side. The chain crosses the membrane as a helical span at residues 326 to 346 (VIILLTLLVTWLWQLLLTAVA). The Lumenal segment spans residues 347–356 (SRFHTVREHM). Residue His-350 is part of the active site. Residues 357–377 (SGLLAAYIVTGLVYARDAAAL) traverse the membrane as a helical segment. Residues 378–380 (RPV) are Cytoplasmic-facing.

This sequence belongs to the FIT family. Fungal FIT2B/SCS3 subfamily.

Its subcellular location is the endoplasmic reticulum membrane. The catalysed reaction is an acyl-CoA + H2O = an acyl-4'-phosphopantetheine + adenosine 3',5'-bisphosphate + 2 H(+). It catalyses the reaction (9Z)-octadecenoyl-CoA + H2O = S-(9Z-octadecenoyl)-4'-phosphopantetheine + adenosine 3',5'-bisphosphate + 2 H(+). It carries out the reaction (5Z,8Z,11Z,14Z)-eicosatetraenoyl-CoA + H2O = S-(5Z,8Z,11Z,14Z-eicosatetraenoyl)-4'-phosphopantetheine + adenosine 3',5'-bisphosphate + 2 H(+). The enzyme catalyses hexadecanoyl-CoA + H2O = S-hexadecanoyl-4'-phosphopantetheine + adenosine 3',5'-bisphosphate + 2 H(+). In terms of biological role, fatty acyl-coenzyme A (CoA) diphosphatase that hydrolyzes fatty acyl-CoA to yield acyl-4'-phosphopantetheine and adenosine 3',5'-bisphosphate. Preferentially hydrolyzes unsaturated long-chain acyl-CoA substrates in the endoplasmic reticulum (ER) lumen. This catalytic activity is required for maintaining ER structure and for lipid droplets (LDs) biogenesis, which are lipid storage organelles involved in maintaining lipid and energy homeostasis. May directly bind to diacylglycerol (DAGs) and triacylglycerol, which is also important for LD biogenesis. May support directional budding of nacent LDs from the ER into the cytosol by reducing DAG levels at sites of LD formation. May play a role in the regulation of cell morphology and cytoskeletal organization. Involved in phospholipid biosynthesis. The protein is Acyl-coenzyme A diphosphatase SCS3 of Saccharomyces cerevisiae (strain ATCC 204508 / S288c) (Baker's yeast).